The sequence spans 257 residues: UPF0246 protein ECA3888 (257 aa).

The protein belongs to the UPF0246 family.

This Pectobacterium atrosepticum (strain SCRI 1043 / ATCC BAA-672) (Erwinia carotovora subsp. atroseptica) protein is UPF0246 protein ECA3888.